The chain runs to 141 residues: Large ribosomal subunit protein uL11 (141 aa).

It belongs to the universal ribosomal protein uL11 family. In terms of assembly, part of the ribosomal stalk of the 50S ribosomal subunit. Interacts with L10 and the large rRNA to form the base of the stalk. L10 forms an elongated spine to which L12 dimers bind in a sequential fashion forming a multimeric L10(L12)X complex. Post-translationally, one or more lysine residues are methylated.

In terms of biological role, forms part of the ribosomal stalk which helps the ribosome interact with GTP-bound translation factors. In Phytoplasma australiense, this protein is Large ribosomal subunit protein uL11.